The following is a 103-amino-acid chain: Large ribosomal subunit protein uL24 (103 aa).

The protein belongs to the universal ribosomal protein uL24 family. In terms of assembly, part of the 50S ribosomal subunit.

In terms of biological role, one of two assembly initiator proteins, it binds directly to the 5'-end of the 23S rRNA, where it nucleates assembly of the 50S subunit. Its function is as follows. One of the proteins that surrounds the polypeptide exit tunnel on the outside of the subunit. This is Large ribosomal subunit protein uL24 from Alkaliphilus metalliredigens (strain QYMF).